The chain runs to 404 residues: DNA replication and repair protein RecF (404 aa).

Residue 30–37 (GSNGQGKT) coordinates ATP.

The protein belongs to the RecF family.

Its subcellular location is the cytoplasm. Its function is as follows. The RecF protein is involved in DNA metabolism; it is required for DNA replication and normal SOS inducibility. RecF binds preferentially to single-stranded, linear DNA. It also seems to bind ATP. The chain is DNA replication and repair protein RecF from Clavibacter michiganensis subsp. michiganensis (strain NCPPB 382).